Consider the following 284-residue polypeptide: Bifunctional protein FolD (284 aa).

Residues 165–167, Ser190, and Val231 contribute to the NADP(+) site; that span reads GRS.

This sequence belongs to the tetrahydrofolate dehydrogenase/cyclohydrolase family. In terms of assembly, homodimer.

It catalyses the reaction (6R)-5,10-methylene-5,6,7,8-tetrahydrofolate + NADP(+) = (6R)-5,10-methenyltetrahydrofolate + NADPH. The catalysed reaction is (6R)-5,10-methenyltetrahydrofolate + H2O = (6R)-10-formyltetrahydrofolate + H(+). It participates in one-carbon metabolism; tetrahydrofolate interconversion. Functionally, catalyzes the oxidation of 5,10-methylenetetrahydrofolate to 5,10-methenyltetrahydrofolate and then the hydrolysis of 5,10-methenyltetrahydrofolate to 10-formyltetrahydrofolate. This is Bifunctional protein FolD from Bacillus licheniformis (strain ATCC 14580 / DSM 13 / JCM 2505 / CCUG 7422 / NBRC 12200 / NCIMB 9375 / NCTC 10341 / NRRL NRS-1264 / Gibson 46).